The primary structure comprises 107 residues: Small ribosomal subunit protein eS25 (107 aa).

Residues 1-35 (MPPKQQLSKAAKAAAAMAGGKKSKKKWSKKSHKDK) are disordered. Over residues 8–20 (SKAAKAAAAMAGG) the composition is skewed to low complexity. Basic residues predominate over residues 21–35 (KKSKKKWSKKSHKDK).

The protein belongs to the eukaryotic ribosomal protein eS25 family.

The sequence is that of Small ribosomal subunit protein eS25 (RPS25) from Candida glabrata (strain ATCC 2001 / BCRC 20586 / JCM 3761 / NBRC 0622 / NRRL Y-65 / CBS 138) (Yeast).